A 153-amino-acid chain; its full sequence is ORM1-like protein 1 (153 aa).

Residues 1–27 are Cytoplasmic-facing; sequence MNVGVAHSEVNPNTRVMNSRGIWLTYA. The next 2 membrane-spanning stretches (helical) occupy residues 28 to 46 and 47 to 64; these read LGVGMLHIVLLSIPFFSVP and VVWTLTNVIHNFGMYVFM. Residues 65–105 lie on the Cytoplasmic side of the membrane; that stretch reads HAVKGTPFETPDQGKARLLTHWEQLDYGVQFTSSRKFFTIS. 2 helical membrane passes run 106–123 and 124–140; these read PIILYFLASFYTKYDTAH and FVINTASLLSVLIPKLP. Topologically, residues 141–153 are cytoplasmic; it reads QLHGVRIFGINKY.

Belongs to the ORM family. Ceramide-sensitive subunit of the serine palmitoyltransferase (SPT) complex, which is also composed of SPTLC1, SPTLC2/3 and SPTSSA/B.

The protein resides in the endoplasmic reticulum membrane. In terms of biological role, plays an essential role in the homeostatic regulation of sphingolipid de novo biosynthesis by modulating the activity of the serine palmitoyltransferase (SPT) in response to ceramide levels. When complexed to SPT, the binding of ceramides to its N-terminus stabilizes a conformation that block SPT substrate entry, hence preventing SPT catalytic activity. Through this mechanism, maintains ceramide levels at sufficient concentrations for the production of complex sphingolipids, but which prevents the accumulation of ceramides to levels that trigger apoptosis. This Danio rerio (Zebrafish) protein is ORM1-like protein 1 (ormdl1).